Reading from the N-terminus, the 544-residue chain is GDP-mannose 4,6-dehydratase sdnI (544 aa).

Residues 16-21 (GITGQD), Arg41, 64-65 (DM), and 86-90 (LAAQS) contribute to the NADP(+) site. Ser90 serves as a coordination point for substrate. Residues Glu135 and Tyr157 each act as nucleophile in the active site. A substrate-binding site is contributed by Tyr157. Lys161 is an NADP(+) binding site. Asn186 is a binding site for substrate. NADP(+) contacts are provided by His187 and Arg192. Substrate-binding positions include 192 to 200 (RGTTFVTRK), Gly219, Arg225, and 303 to 306 (RPVE). Residues 366–406 (GETTSAVNSSPSSTAGDTYKASDGWSTSGAEGSEQTECSSV) are disordered. Polar residues-rich tracts occupy residues 368-381 (TTSA…STAG) and 389-404 (GWST…TECS).

Belongs to the NAD(P)-dependent epimerase/dehydratase family. GDP-mannose 4,6-dehydratase subfamily. Requires NADP(+) as cofactor.

It catalyses the reaction GDP-alpha-D-mannose = GDP-4-dehydro-alpha-D-rhamnose + H2O. It functions in the pathway antibiotic biosynthesis. Its function is as follows. GDP-mannose 4,6-dehydratase; part of the gene cluster that mediates the biosynthesis of sordarin and hypoxysordarin, glycoside antibiotics with a unique tetracyclic diterpene aglycone structure. First, the geranylgeranyl diphosphate synthase sdnC constructs GGDP from farnesyl diphosphate and isopentenyl diphosphate. The diterpene cyclase sdnA then catalyzes the cyclization of GGDP to afford cycloaraneosene. Cycloaraneosene is then hydroxylated four times by the putative cytochrome P450 monooxygenases sdnB, sdnE, sdnF and sdnH to give a hydroxylated cycloaraneosene derivative such as cycloaraneosene-8,9,13,19-tetraol. Although the order of the hydroxylations is unclear, at least C8, C9 and C13 of the cycloaraneosene skeleton are hydroxylated before the sordaricin formation. Dehydration of the 13-hydroxy group of the hydroxylated cycloaraneosene derivative might be catalyzed by an unassigned hypothetical protein such as sdnG and sdnP to construct the cyclopentadiene moiety. The FAD-dependent oxidoreductase sdnN is proposed to catalyze the oxidation at C9 of the hydroxylated cycloaraneosene derivative and also catalyze the Baeyer-Villiger oxidation to give the lactone intermediate. The presumed lactone intermediate would be hydrolyzed to give an acrolein moiety and a carboxylate moiety. Then, [4+2]cycloaddition would occur between the acrolein moiety and the cyclopentadiene moiety to give sordaricin. SdnN might also be involved in the [4+2]cycloaddition after the hypothesized oxidation to accommodate the oxidized product and prompt the [4+2]cycloaddition. GDP-6-deoxy-D-altrose may be biosynthesized from GDP-D-mannose by the putative GDP-mannose-4,6-dehydratase sdnI and the short-chain dehydrogenase sdnK. The glycosyltransferase sdnJ catalyzes the attachment of 6-deoxy-D-altrose onto the 19-hydroxy group of sordaricin to give 4'-O-demethylsordarin. The methyltransferase sdnD would complete the biosynthesis of sordarin. Sordarin can be further modified into hypoxysordarin. The unique acyl chain at the 3'-hydroxy group of hypoxysordarin would be constructed by an iterative type I PKS sdnO and the trans-acting polyketide methyltransferase sdnL. SdnL would be responsible for the introduction of an alpha-methyl group of the polyketide chain. Alternatively, the beta-lactamase-like protein sdnR might be responsible for the cleavage and transfer of the polyketide chain from the PKS sdnO to sordarin. Two putative cytochrome P450 monooxygenases, sdnQ and sdnT, might catalyze the epoxidations of the polyketide chain to complete the biosynthesis of hypoxysordarin. Transcriptional regulators sdnM and sdnS are presumably encoded for the transcriptional regulation of the expression of the sdn gene cluster. The chain is GDP-mannose 4,6-dehydratase sdnI from Sordaria araneosa (Pleurage araneosa).